The sequence spans 334 residues: Fe-S cluster assembly protein DRE2 (334 aa).

The tract at residues 1–131 (MASTKTGLVL…ASIKAEPVAV (131 aa)) is N-terminal SAM-like domain. A linker region spans residues 132–228 (PLRNHKKTTT…EDELVDENEM (97 aa)). The disordered stretch occupies residues 135-229 (NHKKTTTPGT…DELVDENEMR (95 aa)). The segment covering 140–150 (TTPGTTTTAKK) has biased composition (low complexity). Composition is skewed to acidic residues over residues 182 to 192 (DSEDEDEESEG) and 215 to 227 (DSIEEDELVDENE). [2Fe-2S] cluster-binding residues include Cys-238, Cys-249, Cys-252, and Cys-254. The segment at 238–254 (CGKSKTRRRKACKDCTC) is fe-S binding site A. Cys-297, Cys-300, Cys-308, and Cys-311 together coordinate [4Fe-4S] cluster. 2 short sequence motifs (cx2C motif) span residues 297-300 (CGSC) and 308-311 (CSGC). The fe-S binding site B stretch occupies residues 297 to 311 (CGSCTLGDAFRCSGC).

It belongs to the anamorsin family. In terms of assembly, monomer. Interacts with TAH18. Interacts with MIA40. It depends on [2Fe-2S] cluster as a cofactor. [4Fe-4S] cluster is required as a cofactor.

The protein localises to the cytoplasm. The protein resides in the mitochondrion intermembrane space. Functionally, component of the cytosolic iron-sulfur (Fe-S) protein assembly (CIA) machinery required for the maturation of extramitochondrial Fe-S proteins. Part of an electron transfer chain functioning in an early step of cytosolic Fe-S biogenesis, facilitating the de novo assembly of a [4Fe-4S] cluster on the scaffold complex CFD1-NBP35. Electrons are transferred to DRE2 from NADPH via the FAD- and FMN-containing protein TAH18. TAH18-DRE2 are also required for the assembly of the diferric tyrosyl radical cofactor of ribonucleotide reductase (RNR), probably by providing electrons for reduction during radical cofactor maturation in the catalytic small subunit RNR2. In Zygosaccharomyces rouxii (strain ATCC 2623 / CBS 732 / NBRC 1130 / NCYC 568 / NRRL Y-229), this protein is Fe-S cluster assembly protein DRE2.